Reading from the N-terminus, the 476-residue chain is uncharacterized protein (476 aa).

A signal peptide spans 1-24 (MIRKSATGVIVALAVIWGGGTWYT).

The protein to E.coli YdgA and H.influenzae HI_1236.

This is an uncharacterized protein from Escherichia coli (strain K12).